The sequence spans 250 residues: Ubiquinone/menaquinone biosynthesis C-methyltransferase UbiE (250 aa).

Residues Thr73, Asp94, 122–123, and Ser139 each bind S-adenosyl-L-methionine; that span reads NA.

This sequence belongs to the class I-like SAM-binding methyltransferase superfamily. MenG/UbiE family.

The enzyme catalyses a 2-demethylmenaquinol + S-adenosyl-L-methionine = a menaquinol + S-adenosyl-L-homocysteine + H(+). The catalysed reaction is a 2-methoxy-6-(all-trans-polyprenyl)benzene-1,4-diol + S-adenosyl-L-methionine = a 5-methoxy-2-methyl-3-(all-trans-polyprenyl)benzene-1,4-diol + S-adenosyl-L-homocysteine + H(+). Its pathway is quinol/quinone metabolism; menaquinone biosynthesis; menaquinol from 1,4-dihydroxy-2-naphthoate: step 2/2. It functions in the pathway cofactor biosynthesis; ubiquinone biosynthesis. Its function is as follows. Methyltransferase required for the conversion of demethylmenaquinol (DMKH2) to menaquinol (MKH2) and the conversion of 2-polyprenyl-6-methoxy-1,4-benzoquinol (DDMQH2) to 2-polyprenyl-3-methyl-6-methoxy-1,4-benzoquinol (DMQH2). The polypeptide is Ubiquinone/menaquinone biosynthesis C-methyltransferase UbiE (Francisella philomiragia subsp. philomiragia (strain ATCC 25017 / CCUG 19701 / FSC 153 / O#319-036)).